The sequence spans 430 residues: 3-phosphoshikimate 1-carboxyvinyltransferase (430 aa).

3-phosphoshikimate contacts are provided by Lys21, Ser22, and Arg26. Lys21 serves as a coordination point for phosphoenolpyruvate. Positions 94 and 122 each coordinate phosphoenolpyruvate. 3-phosphoshikimate contacts are provided by Ser168, Gln170, Asp315, and Lys342. Gln170 lines the phosphoenolpyruvate pocket. The active-site Proton acceptor is the Asp315. Residues Arg346 and Arg389 each contribute to the phosphoenolpyruvate site.

The protein belongs to the EPSP synthase family. Monomer.

Its subcellular location is the cytoplasm. It catalyses the reaction 3-phosphoshikimate + phosphoenolpyruvate = 5-O-(1-carboxyvinyl)-3-phosphoshikimate + phosphate. It functions in the pathway metabolic intermediate biosynthesis; chorismate biosynthesis; chorismate from D-erythrose 4-phosphate and phosphoenolpyruvate: step 6/7. Catalyzes the transfer of the enolpyruvyl moiety of phosphoenolpyruvate (PEP) to the 5-hydroxyl of shikimate-3-phosphate (S3P) to produce enolpyruvyl shikimate-3-phosphate and inorganic phosphate. The protein is 3-phosphoshikimate 1-carboxyvinyltransferase of Salinibacter ruber (strain DSM 13855 / M31).